The primary structure comprises 1104 residues: Ankyrin repeat- and BTB/POZ domain-containing protein 3 (1104 aa).

The helical transmembrane segment at 168–188 (IVLSWGLAAHCTAAALAALSL) threads the bilayer. Residues 260-301 (SCSGPGSGSGSGPGPSSGPGAAPAADKEREAPGGGAASGGAC) form a disordered region. The segment covering 264–276 (PGSGSGSGPGPSS) has biased composition (gly residues). 5 ANK repeats span residues 603–632 (QGMT…DLNV), 649–678 (RHWT…KVEG), 687–716 (YSET…DPLI), 730–759 (GDMN…KEKS), and 825–854 (TWLE…TIQE). In terms of domain architecture, BTB spans 923–989 (SDVTFLVEGR…LYYGGPESLL (67 aa)).

The protein resides in the membrane. The sequence is that of Ankyrin repeat- and BTB/POZ domain-containing protein 3 from Homo sapiens (Human).